A 660-amino-acid polypeptide reads, in one-letter code: Bifunctional polymyxin resistance protein ArnA (660 aa).

Positions 1-304 are formyltransferase ArnAFT; the sequence is MKTVVFAYHD…TLGLVQGSRL (304 aa). Position 86 to 88 (86 to 88) interacts with (6R)-10-formyltetrahydrofolate; sequence HLI. The active-site Proton donor; for formyltransferase activity is the His-104. Residues Arg-114 and 136–140 contribute to the (6R)-10-formyltetrahydrofolate site; that span reads VKRAD. The dehydrogenase ArnADH stretch occupies residues 314 to 660; the sequence is RRTRVLILGV…RTVDLTDKPS (347 aa). Residues Asp-347 and 368–369 each bind NAD(+); that span reads DI. Residues Ala-393, Tyr-398, and 432–433 contribute to the UDP-alpha-D-glucuronate site; that span reads TS. Residue Glu-434 is the Proton acceptor; for decarboxylase activity of the active site. Residues Arg-460, Asn-492, 526–535, and Tyr-613 contribute to the UDP-alpha-D-glucuronate site; that span reads KLIDGGKQKR. Catalysis depends on Arg-619, which acts as the Proton donor; for decarboxylase activity.

This sequence in the N-terminal section; belongs to the Fmt family. UDP-L-Ara4N formyltransferase subfamily. It in the C-terminal section; belongs to the NAD(P)-dependent epimerase/dehydratase family. UDP-glucuronic acid decarboxylase subfamily. In terms of assembly, homohexamer, formed by a dimer of trimers.

The enzyme catalyses UDP-alpha-D-glucuronate + NAD(+) = UDP-beta-L-threo-pentopyranos-4-ulose + CO2 + NADH. It carries out the reaction UDP-4-amino-4-deoxy-beta-L-arabinose + (6R)-10-formyltetrahydrofolate = UDP-4-deoxy-4-formamido-beta-L-arabinose + (6S)-5,6,7,8-tetrahydrofolate + H(+). Its pathway is nucleotide-sugar biosynthesis; UDP-4-deoxy-4-formamido-beta-L-arabinose biosynthesis; UDP-4-deoxy-4-formamido-beta-L-arabinose from UDP-alpha-D-glucuronate: step 1/3. It functions in the pathway nucleotide-sugar biosynthesis; UDP-4-deoxy-4-formamido-beta-L-arabinose biosynthesis; UDP-4-deoxy-4-formamido-beta-L-arabinose from UDP-alpha-D-glucuronate: step 3/3. It participates in bacterial outer membrane biogenesis; lipopolysaccharide biosynthesis. Bifunctional enzyme that catalyzes the oxidative decarboxylation of UDP-glucuronic acid (UDP-GlcUA) to UDP-4-keto-arabinose (UDP-Ara4O) and the addition of a formyl group to UDP-4-amino-4-deoxy-L-arabinose (UDP-L-Ara4N) to form UDP-L-4-formamido-arabinose (UDP-L-Ara4FN). The modified arabinose is attached to lipid A and is required for resistance to polymyxin and cationic antimicrobial peptides. The polypeptide is Bifunctional polymyxin resistance protein ArnA (Escherichia coli O1:K1 / APEC).